Consider the following 367-residue polypeptide: Choline-phosphate cytidylyltransferase A (367 aa).

Met1 is subject to N-acetylmethionine. Positions 1–32 (MDAQSSAKVNSRKRRKEAPGPNGATEEDGIPS) are disordered. Lys8 is subject to N6-acetyllysine. Ile84, Phe85, His92, and Lys122 together coordinate CTP. Positions 122 and 151 each coordinate phosphocholine. CTP contacts are provided by His168, Asp169, Tyr173, Gln195, Arg196, Thr197, and Ile200. 2 amphipathic regions span residues 228–287 (KELN…EFIG) and 298–315 (ALKH…QAIS). The residue at position 233 (Ser233) is a Phosphoserine. The autoinhibitory (AI) stretch occupies residues 272 to 293 (IDLIQKWEEKSREFIGSFLEMF). Residues 313–367 (AISPKQSPSSSPTHERSPSPSFRWPFSGKTSPSSSPASLSRCRAVTCDISEDEED) form a disordered region. A phosphoserine mark is found at Ser315, Ser319, Ser321, Ser322, and Ser323. Positions 315–324 (SPKQSPSSSP) are enriched in polar residues. Residues 319-324 (SPSSSP) form repeat 1. Positions 319–348 (SPSSSPTHERSPSPSFRWPFSGKTSPSSSP) are 3 X repeats. Thr325 bears the Phosphothreonine mark. A phosphoserine mark is found at Ser329, Ser331, and Ser333. The 2; approximate repeat unit spans residues 329-333 (SPSPS). Over residues 330-352 (PSPSFRWPFSGKTSPSSSPASLS) the composition is skewed to low complexity. Thr342 is subject to Phosphothreonine. Phosphoserine occurs at positions 343, 345, 346, 347, 350, and 352. Repeat 3 spans residues 343–348 (SPSSSP). A Phosphothreonine modification is found at Thr358. Ser362 is modified (phosphoserine).

Belongs to the cytidylyltransferase family. As to quaternary structure, homodimer. Post-translationally, the serine residues of the C-terminus are phosphorylated. The inactive soluble form is stabilized by phosphorylation, the active membrane bound form is promoted by anionic lipids or diacylglycerol, and is stabilized by dephosphorylation. Monoubiquitinated by the SCF(FBXL2) complex, leading to proteasomal degradation. Brain and liver (at protein level). Also found in heart, kidney, spleen, lung, skeletal muscle, ovary and testis.

Its subcellular location is the cytoplasm. It is found in the cytosol. It localises to the membrane. The protein resides in the endoplasmic reticulum membrane. The protein localises to the nucleus. The enzyme catalyses phosphocholine + CTP + H(+) = CDP-choline + diphosphate. It functions in the pathway phospholipid metabolism; phosphatidylcholine biosynthesis; phosphatidylcholine from phosphocholine: step 1/2. Interconverts between an inactive cytosolic form and an active membrane-bound form. Activation involves disruption of an inhibitory interaction between helices at the base of the active site and the autoinhibitory (AI) region. Catalyzes the key rate-limiting step in the CDP-choline pathway for phosphatidylcholine biosynthesis. This chain is Choline-phosphate cytidylyltransferase A (Pcyt1a), found in Mus musculus (Mouse).